The following is a 509-amino-acid chain: Cobyric acid synthase (509 aa).

The region spanning 262–459 (EIKVGIIKLP…IHGIFENDSW (198 aa)) is the GATase cobBQ-type domain. Residue Cys343 is the Nucleophile of the active site. His451 is an active-site residue.

The protein belongs to the CobB/CobQ family. CobQ subfamily.

It participates in cofactor biosynthesis; adenosylcobalamin biosynthesis. Catalyzes amidations at positions B, D, E, and G on adenosylcobyrinic A,C-diamide. NH(2) groups are provided by glutamine, and one molecule of ATP is hydrogenolyzed for each amidation. The sequence is that of Cobyric acid synthase from Prochlorococcus marinus (strain MIT 9215).